We begin with the raw amino-acid sequence, 586 residues long: Septin-9 (586 aa).

Methionine 1 carries the N-acetylmethionine modification. Over residues methionine 1–glycine 14 the composition is skewed to low complexity. Disordered regions lie at residues methionine 1–threonine 49, lysine 62–threonine 108, and arginine 134–arginine 268. 2 positions are modified to phosphoserine: serine 22 and serine 30. Phosphothreonine is present on residues threonine 38, threonine 42, and threonine 49. Lysine 62 bears the N6-acetyllysine mark. Phosphoserine occurs at positions 82, 85, 89, and 96. Residues arginine 134–glutamate 151 are compositionally biased toward basic and acidic residues. The residue at position 142 (threonine 142) is a Phosphothreonine. Residue tyrosine 278 is modified to Phosphotyrosine. One can recognise a Septin-type G domain in the interval glutamine 295–glutamate 567. Residues glycine 305–serine 312 are G1 motif. Glycine 305–serine 312 contacts GTP. Residues serine 327 and serine 332 each carry the phosphoserine modification. GTP contacts are provided by residues threonine 339, glycine 365, lysine 445–glutamate 453, glycine 501, and arginine 516. Residues aspartate 362–glycine 365 form a G3 motif region. The tract at residues alanine 444–aspartate 447 is G4 motif.

This sequence belongs to the TRAFAC class TrmE-Era-EngA-EngB-Septin-like GTPase superfamily. Septin GTPase family. In terms of assembly, septins polymerize into heterooligomeric protein complexes that form filaments, and associate with cellular membranes, actin filaments, and microtubules. GTPase activity is required for filament formation. Interacts with SEPTIN2, SEPTIN6, SEPTIN7, SEPTIN11 and SEPTIN14. Interacts with RTKN and ARHGEF18. In a mesenchymal cell line, Rho/RTKN signals cause disruption of wild-type septin filaments, but not of those containing isoform 2 variants HNA Trp-106 and Phe-111. In a mesenchymal cell line, isoform 2 variants HNA Trp-106 and Phe-111, but not wild type, form filaments with SEPTIN4. In terms of tissue distribution, widely expressed. Isoforms are differentially expressed in testes, kidney, liver heart, spleen, brain, peripheral blood leukocytes, skeletal muscle and kidney. Specific isoforms appear to demonstrate tissue specificity. Isoform 5 is the most highly expressed in fetal tissue. Isoform 1 is detected in all tissues except the brain and thymus, while isoform 2, isoform 3, and isoform 4 are detected at low levels in approximately half of the fetal tissues.

Its subcellular location is the cytoplasm. The protein resides in the cytoskeleton. Its function is as follows. Filament-forming cytoskeletal GTPase. May play a role in cytokinesis (Potential). May play a role in the internalization of 2 intracellular microbial pathogens, Listeria monocytogenes and Shigella flexneri. The protein is Septin-9 of Homo sapiens (Human).